A 197-amino-acid chain; its full sequence is ATP-dependent Clp protease proteolytic subunit (197 aa).

Residue S102 is the Nucleophile of the active site. H127 is an active-site residue.

This sequence belongs to the peptidase S14 family. Fourteen ClpP subunits assemble into 2 heptameric rings which stack back to back to give a disk-like structure with a central cavity, resembling the structure of eukaryotic proteasomes.

The protein resides in the cytoplasm. The enzyme catalyses Hydrolysis of proteins to small peptides in the presence of ATP and magnesium. alpha-casein is the usual test substrate. In the absence of ATP, only oligopeptides shorter than five residues are hydrolyzed (such as succinyl-Leu-Tyr-|-NHMec, and Leu-Tyr-Leu-|-Tyr-Trp, in which cleavage of the -Tyr-|-Leu- and -Tyr-|-Trp bonds also occurs).. Cleaves peptides in various proteins in a process that requires ATP hydrolysis. Has a chymotrypsin-like activity. Plays a major role in the degradation of misfolded proteins. This Buchnera aphidicola subsp. Schizaphis graminum (strain Sg) protein is ATP-dependent Clp protease proteolytic subunit.